Here is a 254-residue protein sequence, read N- to C-terminus: Low affinity immunoglobulin gamma Fc region receptor III-A (254 aa).

Positions 1–20 (MWHLLPPSALLLLISSVTKA) are cleaved as a signal peptide. Residues 21–209 (ADPSKAVVLL…IAPLFPLWQQ (189 aa)) are Extracellular-facing. Ig-like C2-type domains are found at residues 23–104 (PSKA…VQLQ) and 121–174 (KGES…YYCR). Residues Asn-42, Asn-63, Asn-166, and Asn-181 are each glycosylated (N-linked (GlcNAc...) asparagine). Intrachain disulfides connect Cys-47–Cys-90 and Cys-129–Cys-173. Residues 210-230 (IAFCLMMGLLFAVDTGLYFFV) form a helical membrane-spanning segment. The Cytoplasmic portion of the chain corresponds to 231-254 (RRDLRRSMVHKEEYNFKWSQAQDK).

As to quaternary structure, forms a heterooligomeric complex with ITAM-containing signaling subunits FCER1G. Interacts (via transmembrane domain) with signaling subunits; this interaction is a prerequisite for receptor complex expression on the cell surface and intracellular signal transduction. Binds the Fc region of antigen-complexed IgG. Post-translationally, N-glycosylated. Phosphorylated following receptor ligation.

Its subcellular location is the cell membrane. Its function is as follows. Receptor for the invariable Fc fragment of immunoglobulin gamma (IgG). Binds with intermediate affinity to both IgG2a and IgG2b. Can bind to IgG2a and IgG2b monomers. Does not display binding to IgG1 or IgG3. Recognizes neutralizing virus-specific IgGs displayed on the cell surface of infected cells and triggers antibody-dependent cellular cytotoxicity (ADCC). Confers protection to lethal influenza virus infection. On splenic dendritic cells, uptakes antigen immune complexes and efficiently divert them into MHC class I and II antigen presentation pathways to provide for superior priming of CD4-positive and CD8-positive T cell immune responses. Mediates neutrophil activation by IgG complexes redundantly with FCGR2A. Plays a role in promoting bone resorption by enhancing osteoclast differentiation following binding to IgG2a. Also acts as a receptor for the Fc region of immunoglobulin epsilon (IgE). Binds with low affinity to both the a and b allotypes of IgE. Has also been shown to bind to IgE allotype a only but not to allotype b. Binds aggregated IgE but not the monomeric form and bound monomeric IgG is readily displaced by IgE complexes. Binding to IgE promotes macrophage-mediated phagocytosis, antigen presentation to T cells, production of pro-inflammatory cytokines and the late phase of cutaneous allergic reactions. Mediates enhanced ADCC in response to afucosylated IgGs. The polypeptide is Low affinity immunoglobulin gamma Fc region receptor III-A (Cavia porcellus (Guinea pig)).